The sequence spans 318 residues: Methionyl-tRNA formyltransferase (318 aa).

113 to 116 (SLLP) contributes to the (6S)-5,6,7,8-tetrahydrofolate binding site.

Belongs to the Fmt family.

The catalysed reaction is L-methionyl-tRNA(fMet) + (6R)-10-formyltetrahydrofolate = N-formyl-L-methionyl-tRNA(fMet) + (6S)-5,6,7,8-tetrahydrofolate + H(+). Its function is as follows. Attaches a formyl group to the free amino group of methionyl-tRNA(fMet). The formyl group appears to play a dual role in the initiator identity of N-formylmethionyl-tRNA by promoting its recognition by IF2 and preventing the misappropriation of this tRNA by the elongation apparatus. In Hahella chejuensis (strain KCTC 2396), this protein is Methionyl-tRNA formyltransferase.